Reading from the N-terminus, the 218-residue chain is Pyridoxine/pyridoxamine 5'-phosphate oxidase (218 aa).

Substrate-binding positions include 14-17 (RREY) and Lys72. Residues 67 to 72 (RIVLLK), 82 to 83 (YT), Arg88, Lys89, and Gln111 contribute to the FMN site. Substrate-binding residues include Tyr129, Arg133, and Ser137. Residues 146–147 (QS) and Trp191 contribute to the FMN site. A substrate-binding site is contributed by 197-199 (RLH). Arg201 lines the FMN pocket.

Belongs to the pyridoxamine 5'-phosphate oxidase family. As to quaternary structure, homodimer. FMN serves as cofactor.

The catalysed reaction is pyridoxamine 5'-phosphate + O2 + H2O = pyridoxal 5'-phosphate + H2O2 + NH4(+). It carries out the reaction pyridoxine 5'-phosphate + O2 = pyridoxal 5'-phosphate + H2O2. It functions in the pathway cofactor metabolism; pyridoxal 5'-phosphate salvage; pyridoxal 5'-phosphate from pyridoxamine 5'-phosphate: step 1/1. The protein operates within cofactor metabolism; pyridoxal 5'-phosphate salvage; pyridoxal 5'-phosphate from pyridoxine 5'-phosphate: step 1/1. Functionally, catalyzes the oxidation of either pyridoxine 5'-phosphate (PNP) or pyridoxamine 5'-phosphate (PMP) into pyridoxal 5'-phosphate (PLP). The sequence is that of Pyridoxine/pyridoxamine 5'-phosphate oxidase from Salmonella paratyphi B (strain ATCC BAA-1250 / SPB7).